The following is a 158-amino-acid chain: Transcriptional repressor NrdR (158 aa).

Residues 3 to 34 (CPYCGYPDSKVIDSRPTDDNTSIRRRRECLKC) fold into a zinc finger. Residues 49 to 139 (ILVIKKDNRR…VYRQFKDINT (91 aa)) enclose the ATP-cone domain.

The protein belongs to the NrdR family. The cofactor is Zn(2+).

Negatively regulates transcription of bacterial ribonucleotide reductase nrd genes and operons by binding to NrdR-boxes. The protein is Transcriptional repressor NrdR of Thermoanaerobacter pseudethanolicus (strain ATCC 33223 / 39E) (Clostridium thermohydrosulfuricum).